A 181-amino-acid polypeptide reads, in one-letter code: 30 kDa heat shock protein (181 aa).

The region spanning 33–181 is the sHSP domain; the sequence is ASVQSFAPRF…PPTAKKITIQ (149 aa). The span at 79–115 shows a compositional bias: basic and acidic residues; it reads GRSEREYHSSSDDNKNDQADTENQARGESSEVAKTGE. Residues 79–127 form a disordered region; that stretch reads GRSEREYHSSSDDNKNDQADTENQARGESSEVAKTGEKQVSTKKAANKS.

The protein belongs to the small heat shock protein (HSP20) family.

The sequence is that of 30 kDa heat shock protein (hsp30) from Emericella nidulans (strain FGSC A4 / ATCC 38163 / CBS 112.46 / NRRL 194 / M139) (Aspergillus nidulans).